Here is a 469-residue protein sequence, read N- to C-terminus: Ribulose bisphosphate carboxylase large chain (469 aa).

The substrate site is built by Asn115 and Thr165. Lys167 serves as the catalytic Proton acceptor. Residue Lys169 participates in substrate binding. Residues Lys193, Asp195, and Glu196 each contribute to the Mg(2+) site. N6-carboxylysine is present on Lys193. The Proton acceptor role is filled by His286. Substrate-binding residues include Arg287, His319, and Ser371.

The protein belongs to the RuBisCO large chain family. Type I subfamily. Heterohexadecamer of 8 large chains and 8 small chains. Mg(2+) serves as cofactor.

The protein localises to the plastid. Its subcellular location is the organellar chromatophore. It carries out the reaction 2 (2R)-3-phosphoglycerate + 2 H(+) = D-ribulose 1,5-bisphosphate + CO2 + H2O. The catalysed reaction is D-ribulose 1,5-bisphosphate + O2 = 2-phosphoglycolate + (2R)-3-phosphoglycerate + 2 H(+). In terms of biological role, ruBisCO catalyzes two reactions: the carboxylation of D-ribulose 1,5-bisphosphate, the primary event in carbon dioxide fixation, as well as the oxidative fragmentation of the pentose substrate. Both reactions occur simultaneously and in competition at the same active site. In Paulinella chromatophora, this protein is Ribulose bisphosphate carboxylase large chain.